A 75-amino-acid chain; its full sequence is Acyl carrier protein (75 aa).

One can recognise a Carrier domain in the interval 1–75 (MALFDDVKEV…GDAIKFIENV (75 aa)). O-(pantetheine 4'-phosphoryl)serine is present on Ser-36.

The protein belongs to the acyl carrier protein (ACP) family. Post-translationally, 4'-phosphopantetheine is transferred from CoA to a specific serine of apo-ACP by AcpS. This modification is essential for activity because fatty acids are bound in thioester linkage to the sulfhydryl of the prosthetic group.

Its subcellular location is the cytoplasm. The protein operates within lipid metabolism; fatty acid biosynthesis. In terms of biological role, carrier of the growing fatty acid chain in fatty acid biosynthesis. The chain is Acyl carrier protein from Sulfurovum sp. (strain NBC37-1).